The following is a 342-amino-acid chain: Heat-inducible transcription repressor HrcA (342 aa).

This sequence belongs to the HrcA family.

In terms of biological role, negative regulator of class I heat shock genes (grpE-dnaK-dnaJ and groELS operons). Prevents heat-shock induction of these operons. The polypeptide is Heat-inducible transcription repressor HrcA (Corynebacterium efficiens (strain DSM 44549 / YS-314 / AJ 12310 / JCM 11189 / NBRC 100395)).